The following is a 264-amino-acid chain: Acyl-[acyl-carrier-protein]--UDP-N-acetylglucosamine O-acyltransferase (264 aa).

The protein belongs to the transferase hexapeptide repeat family. LpxA subfamily. Homotrimer.

Its subcellular location is the cytoplasm. The catalysed reaction is a (3R)-hydroxyacyl-[ACP] + UDP-N-acetyl-alpha-D-glucosamine = a UDP-3-O-[(3R)-3-hydroxyacyl]-N-acetyl-alpha-D-glucosamine + holo-[ACP]. The protein operates within glycolipid biosynthesis; lipid IV(A) biosynthesis; lipid IV(A) from (3R)-3-hydroxytetradecanoyl-[acyl-carrier-protein] and UDP-N-acetyl-alpha-D-glucosamine: step 1/6. In terms of biological role, involved in the biosynthesis of lipid A, a phosphorylated glycolipid that anchors the lipopolysaccharide to the outer membrane of the cell. This chain is Acyl-[acyl-carrier-protein]--UDP-N-acetylglucosamine O-acyltransferase, found in Chlorobium phaeobacteroides (strain DSM 266 / SMG 266 / 2430).